The following is a 615-amino-acid chain: 1-deoxy-D-xylulose-5-phosphate synthase (615 aa).

Residues histidine 77 and 118–120 contribute to the thiamine diphosphate site; that span reads GHS. Residue aspartate 149 participates in Mg(2+) binding. Thiamine diphosphate-binding positions include 150–151, asparagine 178, tyrosine 286, and glutamate 367; that span reads GA. Position 178 (asparagine 178) interacts with Mg(2+).

This sequence belongs to the transketolase family. DXPS subfamily. Homodimer. Requires Mg(2+) as cofactor. Thiamine diphosphate is required as a cofactor.

The enzyme catalyses D-glyceraldehyde 3-phosphate + pyruvate + H(+) = 1-deoxy-D-xylulose 5-phosphate + CO2. Its pathway is metabolic intermediate biosynthesis; 1-deoxy-D-xylulose 5-phosphate biosynthesis; 1-deoxy-D-xylulose 5-phosphate from D-glyceraldehyde 3-phosphate and pyruvate: step 1/1. Functionally, catalyzes the acyloin condensation reaction between C atoms 2 and 3 of pyruvate and glyceraldehyde 3-phosphate to yield 1-deoxy-D-xylulose-5-phosphate (DXP). This Glaesserella parasuis serovar 5 (strain SH0165) (Haemophilus parasuis) protein is 1-deoxy-D-xylulose-5-phosphate synthase.